Reading from the N-terminus, the 142-residue chain is Large ribosomal subunit protein uL11 (142 aa).

The protein belongs to the universal ribosomal protein uL11 family. In terms of assembly, part of the ribosomal stalk of the 50S ribosomal subunit. Interacts with L10 and the large rRNA to form the base of the stalk. L10 forms an elongated spine to which L12 dimers bind in a sequential fashion forming a multimeric L10(L12)X complex. One or more lysine residues are methylated.

In terms of biological role, forms part of the ribosomal stalk which helps the ribosome interact with GTP-bound translation factors. The polypeptide is Large ribosomal subunit protein uL11 (Klebsiella pneumoniae subsp. pneumoniae (strain ATCC 700721 / MGH 78578)).